The sequence spans 263 residues: MIFHASPGVIDLGVNIDHVATLRNARGTTYPDPIAAALLAEEAGADLITLHLREDRRHIKDADVRALRPQLRTRMNLECAVTQEMLDIACDIGPQDVCLVPERRQEVTTEGGLDVVGGFAKVQAACQQLAGAGIRVSLFIDPDPAQIEAAAATGAPVVELHTGRYAEATDDAEVKAELVRIERAVEEGIRWGLRVNAGHGLHYTNVQPIAAMAGIHELNIGHAIVAHAVFAGWQNAVREMKAIMVAARLSATTPAAAHPGVPA.

Position 15 (N15) interacts with 3-amino-2-oxopropyl phosphate. D17–H18 is a binding site for 1-deoxy-D-xylulose 5-phosphate. Position 26 (R26) interacts with 3-amino-2-oxopropyl phosphate. H51 serves as the catalytic Proton acceptor. 1-deoxy-D-xylulose 5-phosphate-binding residues include R53 and H58. Residue E78 is the Proton acceptor of the active site. T108 lines the 1-deoxy-D-xylulose 5-phosphate pocket. H199 functions as the Proton donor in the catalytic mechanism. Residues G200 and G221–H222 contribute to the 3-amino-2-oxopropyl phosphate site.

It belongs to the PNP synthase family. As to quaternary structure, homooctamer; tetramer of dimers.

It is found in the cytoplasm. It carries out the reaction 3-amino-2-oxopropyl phosphate + 1-deoxy-D-xylulose 5-phosphate = pyridoxine 5'-phosphate + phosphate + 2 H2O + H(+). Its pathway is cofactor biosynthesis; pyridoxine 5'-phosphate biosynthesis; pyridoxine 5'-phosphate from D-erythrose 4-phosphate: step 5/5. Functionally, catalyzes the complicated ring closure reaction between the two acyclic compounds 1-deoxy-D-xylulose-5-phosphate (DXP) and 3-amino-2-oxopropyl phosphate (1-amino-acetone-3-phosphate or AAP) to form pyridoxine 5'-phosphate (PNP) and inorganic phosphate. The chain is Pyridoxine 5'-phosphate synthase from Ralstonia nicotianae (strain ATCC BAA-1114 / GMI1000) (Ralstonia solanacearum).